Reading from the N-terminus, the 92-residue chain is Defensin Lucifensin (92 aa).

Residues 1–23 form the signal peptide; sequence MKFFMVFAVTFCLALSFVSQSLA. Positions 24 to 52 are excised as a propeptide; the sequence is LPADDEAHFVDGLEALKTIEPELHGRYKR. Disulfide bonds link C55–C82, C68–C88, and C72–C90.

It belongs to the invertebrate defensin family. Type 1 subfamily. Post-translationally, the disulfide bonds are essential for antimicrobial activity. As to expression, larval fat body, hemolymph and salivary glands (at protein level). Expressed in the salivary glands of all larval stages.

The protein localises to the secreted. Its subcellular location is the host cell membrane. Its function is as follows. Shows strong antibacterial activity against numerous Gram-positive bacteria. It selectively inhibits peptidoglycan biosynthesis through complex formation with the cell wall precursor lipid II (1:1 molar ratio) thus inhibiting cell wall synthesis. Shows antibacterial activity against the Gram-positive bacteria M.luteus, E.fecalis (MIC=32 mg/L), S.aureus (MIC=16 mg/L), S.carnosus (MIC=2 mg/L), S.pneumoniae (MIC=2 mg/L) and S.pyogenes (MIC=2 mg/L) and against a number of methicillin-resistant S.aureus and glycopeptide-intermediate S.aureus isolates. Does not show antibacterial activity against Gram-negative bacteria or antifungal activity against C.utilis. Shows slight antifungal activity against C.albicans. This chain is Defensin Lucifensin, found in Lucilia sericata (Green bottle fly).